Reading from the N-terminus, the 690-residue chain is MGTVSSRRSWWPLPLLLLLLLGPAGARAQEDEDGDYEELVLALRSEEDGLAEAPEHGATATFHRCAKDPWRLPGTYVVVLKEETHRSQSERTARRLQAQAARRGYLTKILHVFHDLLPGFLVKMSGDLLELALKLPHVDYIEEDSSVFAQSIPWNLERITPPRYRADEYQPPDGGSLVEVYLLDTSIQSDHREIEGRVMVTDFENVPEEDGTRFHRQASKCDSHGTHLAGVVSGRDAGVAKGASMRSLRVLNCQGKGTVSGTLIGLEFIRKSQLVQPVGPLVVLMPLAGGYSRVLNAACQRLARAGVVLVTAAGNFRDDACLYSPASAPEVITVGATNAQDQPVTLGTLGTNFGRCVDLFAPGEDIIGASSDCSTCFVSQSGTSQAAAHVAGIAAMMLSVEPELTLAELRQRLIHFSAKDVINEVWFPEDQRVLTPNLVAALPPSTHGAGWQLFCRTVWSAHSGPTRMATAIARCAPDEELLSCSSFSRSGKRRGERMEAQGGKLVCRAHNAFGGEGVCAIARCCLLPQANCSVHTAPPAGSGMGTRVLCHQQVHVLTGCSSHWEVEDLGTHKPPVLRPRGQPNQCVGHREASIHASCCRAPGLECKVKEHGIPAPQEQVTVACEEGWTLTGCSALPGTSHVLGAYAVDNTCVVRSRDISTTGSTSEEAMAAVAICCRRRHLAQASQELQ.

The N-terminal stretch at 1–28 (MGTVSSRRSWWPLPLLLLLLLGPAGARA) is a signal peptide. The propeptide occupies 29-150 (QEDEDGDYEE…IEEDSSVFAQ (122 aa)). Y36 is modified (sulfotyrosine). At S45 the chain carries Phosphoserine. The 73-residue stretch at 75–147 (TYVVVLKEET…VDYIEEDSSV (73 aa)) folds into the Inhibitor I9 domain. In terms of domain architecture, Peptidase S8 spans 153 to 459 (PWNLERITPP…GWQLFCRTVW (307 aa)). Residues D184 and H224 each act as charge relay system in the active site. Intrachain disulfides connect C221–C253 and C321–C356. The active-site Charge relay system is S384. Residues 448–690 (GAGWQLFCRT…HLAQASQELQ (243 aa)) form a C-terminal domain region. 3 cysteine pairs are disulfide-bonded: C455-C525, C475-C524, and C484-C507. N-linked (GlcNAc...) asparagine glycosylation is present at N531. Disulfide bonds link C532–C599, C550–C598, C560–C586, C606–C677, C624–C676, and C633–C652. S686 is subject to Phosphoserine.

It belongs to the peptidase S8 family. Monomer. Can self-associate to form dimers and higher multimers which may have increased LDLR degrading activity. The precursor protein but not the mature protein may form multimers. Interacts with APOB, VLDLR, LRP8/APOER2 and BACE1. The full-length immature form (pro-PCSK9) interacts with SCNN1A, SCNN1B and SCNN1G. The pro-PCSK9 form (via C-terminal domain) interacts with LDLR. Interacts (via the C-terminal domain) with ANXA2 (via repeat Annexin 1); the interaction inhibits the degradation of LDLR. Ca(2+) is required as a cofactor. Cleavage by furin and PCSK5 generates a truncated inactive protein that is unable to induce LDLR degradation. Post-translationally, undergoes autocatalytic cleavage in the endoplasmic reticulum to release the propeptide from the N-terminus and the cleavage of the propeptide is strictly required for its maturation and activation. The cleaved propeptide however remains associated with the catalytic domain through non-covalent interactions, preventing potential substrates from accessing its active site. As a result, it is secreted from cells as a propeptide-containing, enzymatically inactive protein. In terms of processing, phosphorylation protects the propeptide against proteolysis.

The protein resides in the cytoplasm. It is found in the secreted. The protein localises to the endosome. It localises to the lysosome. Its subcellular location is the cell surface. The protein resides in the endoplasmic reticulum. It is found in the golgi apparatus. Its proteolytic activity is autoinhibited by the non-covalent binding of the propeptide to the catalytic domain. Inhibited by EGTA. Functionally, crucial player in the regulation of plasma cholesterol homeostasis. Binds to low-density lipid receptor family members: low density lipoprotein receptor (LDLR), very low density lipoprotein receptor (VLDLR), apolipoprotein E receptor (LRP1/APOER) and apolipoprotein receptor 2 (LRP8/APOER2), and promotes their degradation in intracellular acidic compartments. Acts via a non-proteolytic mechanism to enhance the degradation of the hepatic LDLR through a clathrin LDLRAP1/ARH-mediated pathway. May prevent the recycling of LDLR from endosomes to the cell surface or direct it to lysosomes for degradation. Can induce ubiquitination of LDLR leading to its subsequent degradation. Inhibits intracellular degradation of APOB via the autophagosome/lysosome pathway in a LDLR-independent manner. Involved in the disposal of non-acetylated intermediates of BACE1 in the early secretory pathway. Inhibits epithelial Na(+) channel (ENaC)-mediated Na(+) absorption by reducing ENaC surface expression primarily by increasing its proteasomal degradation. Regulates neuronal apoptosis via modulation of LRP8/APOER2 levels and related anti-apoptotic signaling pathways. The chain is Proprotein convertase subtilisin/kexin type 9 (PCSK9) from Pongo pygmaeus (Bornean orangutan).